Consider the following 388-residue polypeptide: MIYLVISVFLITAFICLYLKKDIFYPAVCVNIIFALVLLGYEITSDIYAFQLNDATLIFLLCNVLTFTLSCLLTESVLDLNIRKVNNAIYSIPSKKVHNVGLLVISFSMIYICMRLSNYQFGTSLLSYMNLIRDADVEDTSRNFSAYMQPIILTTFALFIWSKKFTNTKVSKTFTLLVFIVFIFAIILNTGKQIVFMVIISYAFIVGVNRVKHYVYLITAVGVLFSLYMLFLRGLPGGMAYYLSMYLVSPIIAFQEFYFQQVSNSASSHVFWFFERLMGLLTGGVSMSLHKEFVWVGLPTNVYTAFSDYVYISAELSYLMMVIHGCISGVLWRLSRNYISVKIFYSYFIYTFSFIFYHESFMTNISSWIQITLCIIVFSQFLKAQKIK.

Transmembrane regions (helical) follow at residues 23–43, 57–77, 97–117, 143–163, 180–200, 215–235, 312–332, 338–358, and 361–381; these read IFYPAVCVNIIFALVLLGYEI, LIFLLCNVLTFTLSCLLTESV, VHNVGLLVISFSMIYICMRLS, NFSAYMQPIILTTFALFIWSK, IVFIFAIILNTGKQIVFMVII, VYLITAVGVLFSLYMLFLRGL, ISAELSYLMMVIHGCISGVLW, YISVKIFYSYFIYTFSFIFYH, and FMTNISSWIQITLCIIVFSQF.

It is found in the cell inner membrane. In terms of biological role, may function in vitro as a polymerase that catalyzes the polymerization of the O-antigen repeat units on the periplasmic face of the inner membrane, leading to the formation of the lipid-linked O-antigen molecule. However, E.coli K12 strains do not normally produce the O-antigen in vivo due to mutations in the rfb gene cluster. K12 strains are phenotypically rough, their lipopolysaccharide having a complete core structure, but no O-antigen. The protein is Putative O-antigen polymerase of Escherichia coli (strain K12).